A 313-amino-acid chain; its full sequence is Uracil-DNA glycosylase (313 aa).

The segment covering 1-12 (MIGQKTLYSFFS) has biased composition (polar residues). The interaction with FAM72A stretch occupies residues 1 to 25 (MIGQKTLYSFFSPSPARKRHAPSPE). The mitochondrial localization signal stretch occupies residues 1 to 29 (MIGQKTLYSFFSPSPARKRHAPSPEPAVQ). The disordered stretch occupies residues 1-68 (MIGQKTLYSF…GTPPSSPLSA (68 aa)). Phosphoserine occurs at positions 12 and 14. Positions 17 to 19 (RKR) match the Important for nuclear sorting motif. The residue at position 23 (serine 23) is a Phosphoserine. Positions 43–53 (AAAIPAKKAPA) are enriched in low complexity. Position 60 is a phosphothreonine (threonine 60). Serine 64 carries the post-translational modification Phosphoserine. The tract at residues 73-88 (RIQRNKAAALLRLAAR) is interaction with RPA2. Position 153 (glutamine 153) interacts with uracil. Aspartate 154 (proton acceptor) is an active-site residue. Residue histidine 157 coordinates dsDNA. Phenylalanine 167 is a uracil binding site. Serine 178 is a binding site for dsDNA. Position 213 (asparagine 213) interacts with uracil. DsDNA is bound by residues serine 256, histidine 277, serine 279, serine 282, and arginine 285. Position 277 (histidine 277) interacts with uracil. Lysine 295 is subject to N6-acetyllysine.

It belongs to the uracil-DNA glycosylase (UDG) superfamily. UNG family. In terms of assembly, monomer. As to quaternary structure, interacts with RPA2 subunit of the RPA trimer; this interaction mediates UNG2 recruitment to RPA-coated single-stranded DNA at stalled replication forks. Interacts with PCNA; this interaction mediates UNG2 recruitment to S-phase replication foci. Interacts (via N-terminus) with FAM72A. (Microbial infection) Interacts with HIV-1 Vpr. Post-translationally, processed by mitochondrial serine or cysteine peptidases to yield a mature dominant form that lacks N-terminal 29 amino acid residues and another minor form that lacks N-terminal 77 amino acid residues. The catalytic activity of UNG1 delta29 is not product-inhibited by AP sites.

It localises to the mitochondrion. The protein localises to the nucleus. The enzyme catalyses Hydrolyzes single-stranded DNA or mismatched double-stranded DNA and polynucleotides, releasing free uracil.. It carries out the reaction a 2'-deoxyuridine in single-stranded DNA + H2O = a 2'-deoxyribose 5'-monophosphate in single-stranded DNA + uracil. It catalyses the reaction a 2'-deoxyuridine in double-stranded DNA + H2O = a 2'-deoxyribose 5'-monophosphate in double-stranded DNA + uracil. In terms of biological role, uracil-DNA glycosylase that hydrolyzes the N-glycosidic bond between uracil and deoxyribose in single- and double-stranded DNA (ssDNA and dsDNA) to release a free uracil residue and form an abasic (apurinic/apyrimidinic; AP) site. Excises uracil residues arising as a result of misincorporation of dUMP residues by DNA polymerase during replication or due to spontaneous or enzymatic deamination of cytosine. Mediates error-free base excision repair (BER) of uracil at replication forks. According to the model, it is recruited by PCNA to S-phase replication forks to remove misincorporated uracil at U:A base mispairs in nascent DNA strands. Via trimeric RPA it is recruited to ssDNA stretches ahead of the polymerase to allow detection and excision of deaminated cytosines prior to replication. The resultant AP sites temporarily stall replication, allowing time to repair the lesion. Mediates mutagenic uracil processing involved in antibody affinity maturation. Processes AICDA-induced U:G base mispairs at variable immunoglobulin (Ig) regions leading to the generation of transversion mutations. Operates at switch sites of Ig constant regions where it mediates Ig isotype class switch recombination. Excises AICDA-induced uracil residues forming AP sites that are subsequently nicked by APEX1 endonuclease. The accumulation of staggered nicks in opposite strands results in double strand DNA breaks that are finally resolved via non-homologous end joining repair pathway. The polypeptide is Uracil-DNA glycosylase (Homo sapiens (Human)).